The primary structure comprises 245 residues: UPF0246 protein CE1889 (245 aa).

The segment at 1–20 is disordered; that stretch reads MLILLPPSETKTPGGAGAPL.

The protein belongs to the UPF0246 family.

The sequence is that of UPF0246 protein CE1889 from Corynebacterium efficiens (strain DSM 44549 / YS-314 / AJ 12310 / JCM 11189 / NBRC 100395).